A 513-amino-acid polypeptide reads, in one-letter code: Putative ADP-ribosyl glycohydrolase L444 (513 aa).

The span at 1-23 shows a compositional bias: basic and acidic residues; it reads MSDKIQSRESKTTKPTKTEKISD. The disordered stretch occupies residues 1–33; the sequence is MSDKIQSRESKTTKPTKTEKISDKSGNLSQVKS. The span at 24 to 33 shows a compositional bias: polar residues; that stretch reads KSGNLSQVKS.

Belongs to the ADP-ribosylglycohydrolase family.

The polypeptide is Putative ADP-ribosyl glycohydrolase L444 (Acanthamoeba polyphaga mimivirus (APMV)).